The chain runs to 349 residues: NADH-quinone oxidoreductase subunit H (349 aa).

The next 8 membrane-spanning stretches (helical) occupy residues 20 to 42 (WTLI…LTYF), 88 to 108 (GIFI…WAVV), 123 to 143 (LLYI…SGWA), 167 to 187 (MGFS…VEIV), 202 to 222 (FLSW…ISGV), 249 to 269 (GMAF…VSAL), 284 to 304 (FLPD…FLFL), and 325 to 345 (VFVP…MSPL).

Belongs to the complex I subunit 1 family. In terms of assembly, NDH-1 is composed of 14 different subunits. Subunits NuoA, H, J, K, L, M, N constitute the membrane sector of the complex.

Its subcellular location is the cell inner membrane. It catalyses the reaction a quinone + NADH + 5 H(+)(in) = a quinol + NAD(+) + 4 H(+)(out). Functionally, NDH-1 shuttles electrons from NADH, via FMN and iron-sulfur (Fe-S) centers, to quinones in the respiratory chain. The immediate electron acceptor for the enzyme in this species is believed to be ubiquinone. Couples the redox reaction to proton translocation (for every two electrons transferred, four hydrogen ions are translocated across the cytoplasmic membrane), and thus conserves the redox energy in a proton gradient. This subunit may bind ubiquinone. This is NADH-quinone oxidoreductase subunit H from Dechloromonas aromatica (strain RCB).